The chain runs to 418 residues: Enolase 1 (418 aa).

(2R)-2-phosphoglycerate is bound at residue Gln-162. Residue Glu-204 is the Proton donor of the active site. The Mg(2+) site is built by Asp-241, Glu-285, and Asp-312. (2R)-2-phosphoglycerate contacts are provided by Lys-337, Arg-366, Ser-367, and Lys-388. The active-site Proton acceptor is the Lys-337.

It belongs to the enolase family. It depends on Mg(2+) as a cofactor.

It is found in the cytoplasm. Its subcellular location is the secreted. The protein resides in the cell surface. It catalyses the reaction (2R)-2-phosphoglycerate = phosphoenolpyruvate + H2O. It participates in carbohydrate degradation; glycolysis; pyruvate from D-glyceraldehyde 3-phosphate: step 4/5. Catalyzes the reversible conversion of 2-phosphoglycerate (2-PG) into phosphoenolpyruvate (PEP). It is essential for the degradation of carbohydrates via glycolysis. This is Enolase 1 from Lactococcus lactis subsp. cremoris (strain SK11).